Reading from the N-terminus, the 652-residue chain is DNA ligase (652 aa).

Residues Asp-29–Asp-33, Ser-78–Leu-79, and Glu-107 contribute to the NAD(+) site. Residue Lys-109 is the N6-AMP-lysine intermediate of the active site. The NAD(+) site is built by Arg-130, Glu-164, Lys-278, and Lys-302. Zn(2+)-binding residues include Cys-395, Cys-398, Cys-413, and Cys-418. The region spanning Val-577–Leu-652 is the BRCT domain.

The protein belongs to the NAD-dependent DNA ligase family. LigA subfamily. The cofactor is Mg(2+). Requires Mn(2+) as cofactor.

It catalyses the reaction NAD(+) + (deoxyribonucleotide)n-3'-hydroxyl + 5'-phospho-(deoxyribonucleotide)m = (deoxyribonucleotide)n+m + AMP + beta-nicotinamide D-nucleotide.. In terms of biological role, DNA ligase that catalyzes the formation of phosphodiester linkages between 5'-phosphoryl and 3'-hydroxyl groups in double-stranded DNA using NAD as a coenzyme and as the energy source for the reaction. It is essential for DNA replication and repair of damaged DNA. The sequence is that of DNA ligase from Streptococcus pneumoniae serotype 4 (strain ATCC BAA-334 / TIGR4).